The following is a 378-amino-acid chain: Protein RecA (378 aa).

Residue 66–73 (GPESSGKT) coordinates ATP. The segment at 333–378 (PDAAKAEAATDAAAAADTAGTDDAAKSVPAPASKTAKATKATAVKS) is disordered. A compositionally biased stretch (low complexity) spans 338-378 (AEAATDAAAAADTAGTDDAAKSVPAPASKTAKATKATAVKS).

It belongs to the RecA family.

It localises to the cytoplasm. Its function is as follows. Can catalyze the hydrolysis of ATP in the presence of single-stranded DNA, the ATP-dependent uptake of single-stranded DNA by duplex DNA, and the ATP-dependent hybridization of homologous single-stranded DNAs. It interacts with LexA causing its activation and leading to its autocatalytic cleavage. The protein is Protein RecA of Streptomyces venezuelae (strain ATCC 10712 / CBS 650.69 / DSM 40230 / JCM 4526 / NBRC 13096 / PD 04745).